Here is a 124-residue protein sequence, read N- to C-terminus: V-type proton ATPase subunit F (124 aa).

Belongs to the V-ATPase F subunit family. V-ATPase is a heteromultimeric enzyme composed of a peripheral catalytic V1 complex (components A to H) attached to an integral membrane V0 proton pore complex (components: a, c, c', c'', d, e, f and VOA1).

The protein resides in the vacuole membrane. In terms of biological role, subunit of the V1 complex of vacuolar(H+)-ATPase (V-ATPase), a multisubunit enzyme composed of a peripheral complex (V1) that hydrolyzes ATP and a membrane integral complex (V0) that translocates protons. V-ATPase is responsible for acidifying and maintaining the pH of intracellular compartments. This is V-type proton ATPase subunit F (vma7) from Neosartorya fischeri (strain ATCC 1020 / DSM 3700 / CBS 544.65 / FGSC A1164 / JCM 1740 / NRRL 181 / WB 181) (Aspergillus fischerianus).